Consider the following 423-residue polypeptide: tRNA(Ile)-lysidine synthase (423 aa).

27 to 32 contacts ATP; that stretch reads SGGVDS.

This sequence belongs to the tRNA(Ile)-lysidine synthase family.

It localises to the cytoplasm. It carries out the reaction cytidine(34) in tRNA(Ile2) + L-lysine + ATP = lysidine(34) in tRNA(Ile2) + AMP + diphosphate + H(+). Functionally, ligates lysine onto the cytidine present at position 34 of the AUA codon-specific tRNA(Ile) that contains the anticodon CAU, in an ATP-dependent manner. Cytidine is converted to lysidine, thus changing the amino acid specificity of the tRNA from methionine to isoleucine. In Streptococcus mutans serotype c (strain ATCC 700610 / UA159), this protein is tRNA(Ile)-lysidine synthase.